The primary structure comprises 174 residues: Probable E3 ubiquitin-protein ligase RHA4A (174 aa).

Residues 105 to 147 (CCVCLGEFELKEELVEMPLCKHIFHLDCIHLWLYSHNTCPLCR) form an RING-type; atypical zinc finger. Positions 155–174 (TKTSVDDDNDHPDSPQTSPV) are disordered.

As to expression, expressed in stems, flowers, cauline leaves and roots.

The catalysed reaction is S-ubiquitinyl-[E2 ubiquitin-conjugating enzyme]-L-cysteine + [acceptor protein]-L-lysine = [E2 ubiquitin-conjugating enzyme]-L-cysteine + N(6)-ubiquitinyl-[acceptor protein]-L-lysine.. It functions in the pathway protein modification; protein ubiquitination. In terms of biological role, probable E3 ubiquitin-protein ligase that may possess E3 ubiquitin ligase activity in vitro. This is Probable E3 ubiquitin-protein ligase RHA4A from Arabidopsis thaliana (Mouse-ear cress).